The chain runs to 257 residues: Hydroxyacylglutathione hydrolase (257 aa).

Zn(2+) is bound by residues histidine 58, histidine 60, aspartate 62, histidine 63, histidine 116, aspartate 135, and histidine 173.

The protein belongs to the metallo-beta-lactamase superfamily. Glyoxalase II family. In terms of assembly, monomer. Zn(2+) serves as cofactor.

The catalysed reaction is an S-(2-hydroxyacyl)glutathione + H2O = a 2-hydroxy carboxylate + glutathione + H(+). Its pathway is secondary metabolite metabolism; methylglyoxal degradation; (R)-lactate from methylglyoxal: step 2/2. Its function is as follows. Thiolesterase that catalyzes the hydrolysis of S-D-lactoyl-glutathione to form glutathione and D-lactic acid. In Brucella melitensis biotype 1 (strain ATCC 23456 / CCUG 17765 / NCTC 10094 / 16M), this protein is Hydroxyacylglutathione hydrolase.